Here is a 343-residue protein sequence, read N- to C-terminus: Follistatin (343 aa).

Residues 1–28 (MLNQRIHPGMLVLLMFLYHFMEDHTAQA) form the signal peptide. A TB domain is found at 29-102 (GNCWLRQARN…TCENVDCGPG (74 aa)). 8 disulfides stabilise this stretch: Cys-31–Cys-54, Cys-41–Cys-87, Cys-55–Cys-90, Cys-94–Cys-105, Cys-99–Cys-115, Cys-117–Cys-149, Cys-121–Cys-142, and Cys-131–Cys-163. The Follistatin-like 1 domain maps to 93-116 (TCENVDCGPGKKCKMNKKNKPRCV). Kazal-like domains lie at 99–165 (CGPG…KCKK), 185–240 (NAYC…KCIK), and 263–317 (RGRC…SCNS). N-linked (GlcNAc...) asparagine glycosylation is present at Asn-123. A Follistatin-like 2 domain is found at 166 to 189 (TCRDVLCPGSSTCVVDQTNNAYCV). Disulfide bonds link Cys-191-Cys-224, Cys-195-Cys-217, and Cys-206-Cys-238. Residues 243–267 (SCEDIQCSAGKKCLWDFKVGRGRCA) form the Follistatin-like 3 domain. Cystine bridges form between Cys-269-Cys-301, Cys-273-Cys-294, and Cys-283-Cys-315. The N-linked (GlcNAc...) asparagine glycan is linked to Asn-287. Residues 315-343 (CNSINEDPEEEEEDEDQDYSFPISSILEW) form a disordered region. Residues 320–332 (EDPEEEEEDEDQD) show a composition bias toward acidic residues.

As to quaternary structure, monomer. Ciliary ganglion neurons. Levels are higher in the iris than the choroid.

It localises to the secreted. Functionally, binds directly to activin and functions as an activin antagonist. Inhibits activin A signaling in the iris and regulates somatostatin phenotype in ciliary ganglion neurons. Specific inhibitor of the biosynthesis and secretion of pituitary follicle stimulating hormone (FSH). This Gallus gallus (Chicken) protein is Follistatin (FST).